The sequence spans 310 residues: L-lactate dehydrogenase (310 aa).

NAD(+) is bound by residues Val-11, Asp-32, Tyr-62, and 76 to 77 (GV). Substrate is bound by residues Gln-79, Arg-85, and 117–120 (NPVD). Residues 115–117 (ATN) and Ser-140 contribute to the NAD(+) site. A substrate-binding site is contributed by 145 to 148 (DTAR). Beta-D-fructose 1,6-bisphosphate-binding residues include Arg-150 and His-165. Catalysis depends on His-172, which acts as the Proton acceptor. Tyr-218 is subject to Phosphotyrosine. Thr-227 provides a ligand contact to substrate.

The protein belongs to the LDH/MDH superfamily. LDH family. Homotetramer.

Its subcellular location is the cytoplasm. It carries out the reaction (S)-lactate + NAD(+) = pyruvate + NADH + H(+). The protein operates within fermentation; pyruvate fermentation to lactate; (S)-lactate from pyruvate: step 1/1. With respect to regulation, allosterically activated by fructose 1,6-bisphosphate (FBP). Catalyzes the conversion of lactate to pyruvate. This is L-lactate dehydrogenase from Thermus thermophilus (strain ATCC BAA-163 / DSM 7039 / HB27).